The primary structure comprises 2083 residues: MSLAPEWQHPFVNIFKLCDVDTMREFETKGDVTEHIDKIIGKKVFKIRGMIPAGNYLRVPRTKLQTLGLTGRLLYIQLKVTPIKVFAIHIEVVTEDHNIHRISISNMYNPESMKRKSNGVQLPFPKPSHRWCVLAVDLREALRGYTSSPFASVKAVQTCSWMTVRTMFASDYKFSLQSLPGDMALSHALDSSLFEMVWLPAEPQDAPTMDFMPPPKRYGTRARRPGTAETADTAGAAGRKSLSGASAGGAGPAKGGAKAGAAAGGKRAVSSAGATRGTPSQRGSTAGAATPGSGAGGGGHDGEEDFEDDLSEDLDNGAPLPPSPAVPPPLSPSVAARIAGRATSANIGAATAAGAIVGAAAAHPRPGESDASARPFPRPTTALLAGAATTASLRPPIASANVAKPEPGQPAAQPLLPDPALTLTRVNAYSGEFVRCLAWLPGTDEVVFAAASVVVIMGVADPGAAAQQQAAVTPGRQRYCLGHTAFVCALAVASDGRLLASCQEGKEAIVRLWDTANCACLAILNAHASGLSCVDLSPDLRALAAVGLDVQGRQTIALWNIAELRAAGGPKVELVTRHATEYNIKVLKFSAYQEDHLLTAGRDSIRIYRLKAGQLRGTSVRLVPQDKRVTSFAGGVSAAVGPNIFTDIGFEAGVGVYGVDAFKVYVSSASGALFVVDYTTRQLDAIFQLHAAAINCLVVSDGLVLTGGDDRLLRAWPLDFRDYLLEAEHEGAVTGLAMSTDALRLAVGTENGTLGVLAIPTHAYTTLLRSHCGAVNAVAVDPNRDQYCTVSSDGTLRIWHLATHQQLYEFDAPGEAVSAIAYHPHPSHHELAAGFANGRLRVFDVPSTTLLQEHHQHRAGITELLFSPGGDRLFSGGADGALVVYDTARMYAPAQYLSAGVRDIKVCCAVSSNGAFFASLVRDPYRRTTSLLVFHGRTLDPFMRIETDAAAYVKLAFSADCNELWALTSGRRLDRYELKDGQLVQQIHEVSPLELTALCLDPAGRYAATAGADGLLRLWGCVPLPALRGLKGLPPNSAFLGHPSAILGAAFHRSGYLVTVGDADCVCVWRVNADHMQQERGHLAAAAHALRGAAAGGGAAGASPLLLQGAAHHTQATGALDPTDPRSRAHPSTALGPVASARDHQLTTRAAALGTPLPAGVLGLVPAPSAFTGTYTQGMAAPSLGSTVASPTRVTAATANSMAALSLVANSPAVAATAPGLPSHALVVPKPSPPPPSAAPASPGRSPNRALAGAGPARSRLPVPLPPSPQPLPPPPPPRCSWLLGYSPTGSSNVAWNATTGLFCYVVEDMVVMEKLATRQQRYLRGHNRPLSCLAASPDGALVAAGPAAAEPAFTEPAAGARAAQLQQQGVAVGPGGASPTAPFADVVVWEAASGRELWRLRYHPLGVQALAFSPDGRWLVSLGRDPERGVVVWDVAAGLLVAAGRTEQSPRAAAWLWGGHNPAFATAGADGLLLWTLQDNFLEQRTVPLSPTASPRDPRPVTALAVDPHGALLAAEAPAAPGSQVPVWQVQVELQPPQEPGGEAAVAPGGGGGMSAAVVQVAALPSGCVVTAMAAGLDFALLATDGGSVVRYRRSTLSGTWLESSAVRLDGRVAALSAEPNMCDAVAATDTATIWFVGMQDASCVPIVCGQAAPVTGLVPAPHSGRVMASTAADGLLRVWRLGPEDAEPALELHSTSPATAAAFLLRQPTDAPAHTLRHPPSAAPSSAASSSPLDPLDPLPAADAAPARPVLLPAPHLLGGYGDGSLRLFALEPAVQLSWALARHPAPVVGVAPHPRRGLVLSASSDGSLAVTDLSSTRLVSYITAFTAAGPTPHSPGGTGRRSPRGAASPPPAPPRPGTGPLQAMAVSSGPGAPLAALAWRDRLVVFAAPWDDPACSPLAEYDVTPSDGRTDAADSHGLLSPDVPACLAFVNSSSGSSSSGTSAASPGLSAHLGGSSSGAPSSKLLAYASPLLPGTVLLYDVRLAAVARRVRLPQMVRSLAVAPDGGAMVVGCMGRSVFLVHLASGNTEELGGHAGAVAAASYTGDGGHAVTASGSVLMVWDAAQLLKGVTPPPPRMLREF.

Residues 205–333 (DAPTMDFMPP…PAVPPPLSPS (129 aa)) form a disordered region. Over residues 227–245 (TAETADTAGAAGRKSLSGA) the composition is skewed to low complexity. Residues 246-258 (SAGGAGPAKGGAK) are compositionally biased toward gly residues. 2 stretches are compositionally biased toward low complexity: residues 259 to 274 (AGAA…SAGA) and 283 to 292 (GSTAGAATPG). Residues 302 to 315 (GEEDFEDDLSEDLD) show a composition bias toward acidic residues. The segment covering 319–331 (PLPPSPAVPPPLS) has biased composition (pro residues). 10 WD repeats span residues 482–523 (GHTA…CLAI), 526–569 (AHAS…AAGG), 579–620 (ATEY…GTSV), 689–726 (LHAA…YLLE), 728–767 (EHEG…YTTL), 770–809 (SHCG…QLYE), 812–853 (APGE…LLQE), 856–895 (QHRA…APAQ), 990–1029 (VSPL…ALRG), and 1041–1079 (GHPS…MQQE). Disordered regions lie at residues 1113–1141 (HTQA…VASA) and 1225–1276 (ALVV…PPPP). The segment covering 1263-1276 (VPLPPSPQPLPPPP) has biased composition (pro residues). 7 WD repeats span residues 1326–1365 (GHNR…RAAQ), 1403–1444 (YHPL…LVAA), 1448–1486 (EQSP…LEQR), 1497–1539 (RDPR…QPPQ), 1651–1691 (GQAA…AEPA), 1736–1781 (DPLD…QLSW), and 1785–1824 (RHPA…LVSY). The segment at 1713–1743 (APAHTLRHPPSAAPSSAASSSPLDPLDPLPA) is disordered. Residues 1720–1743 (HPPSAAPSSAASSSPLDPLDPLPA) are compositionally biased toward low complexity. The interval 1832-1870 (GPTPHSPGGTGRRSPRGAASPPPAPPRPGTGPLQAMAVS) is disordered. Positions 1851–1860 (SPPPAPPRPG) are enriched in pro residues. The stretch at 2035–2073 (GHAGAVAAASYTGDGGHAVTASGSVLMVWDAAQLLKGVT) is one WD 18 repeat.

Belongs to the WD repeat WDR90/POC16 family.

It is found in the cytoplasm. It localises to the cytoskeleton. The protein localises to the microtubule organizing center. Its subcellular location is the centrosome. The protein resides in the centriole. Its function is as follows. Required for flagellum assembly and/or maintenance. The polypeptide is Centriole proteome protein 16 (Chlamydomonas reinhardtii (Chlamydomonas smithii)).